The primary structure comprises 244 residues: ATP-dependent dethiobiotin synthetase BioD 1 (244 aa).

12–17 lines the ATP pocket; the sequence is NVGKTV. Thr-16 serves as a coordination point for Mg(2+). Lys-37 is an active-site residue. Position 68 (Asp-68) interacts with ATP. 2 residues coordinate Mg(2+): Asp-68 and Glu-126. ATP contacts are provided by residues 186–187, 215–217, and Glu-222; these read NR and PYL.

Belongs to the dethiobiotin synthetase family. Homodimer. The cofactor is Mg(2+).

Its subcellular location is the cytoplasm. It carries out the reaction (7R,8S)-7,8-diammoniononanoate + CO2 + ATP = (4R,5S)-dethiobiotin + ADP + phosphate + 3 H(+). Its pathway is cofactor biosynthesis; biotin biosynthesis; biotin from 7,8-diaminononanoate: step 1/2. In terms of biological role, catalyzes a mechanistically unusual reaction, the ATP-dependent insertion of CO2 between the N7 and N8 nitrogen atoms of 7,8-diaminopelargonic acid (DAPA, also called 7,8-diammoniononanoate) to form a ureido ring. In Pasteurella multocida (strain Pm70), this protein is ATP-dependent dethiobiotin synthetase BioD 1.